Here is a 95-residue protein sequence, read N- to C-terminus: Bombyxin F-1 (95 aa).

An N-terminal signal peptide occupies residues 1 to 19 (MKLVVIVLLVISVSILVSA). 3 cysteine pairs are disulfide-bonded: Cys-29-Cys-82, Cys-41-Cys-95, and Cys-81-Cys-86. The propeptide at 53–71 (NSDMVYEDSGMPELLPADT) is c peptide like.

Belongs to the insulin family. Heterodimer of a B chain and an A chain linked by two disulfide bonds.

It localises to the secreted. The protein is Bombyxin F-1 (BBXF1) of Bombyx mori (Silk moth).